The sequence spans 127 residues: Protein ApaG (127 aa).

One can recognise an ApaG domain in the interval 3–127 (ESEKYRIEVE…FMLAMPRVLH (125 aa)).

This Aromatoleum aromaticum (strain DSM 19018 / LMG 30748 / EbN1) (Azoarcus sp. (strain EbN1)) protein is Protein ApaG.